The primary structure comprises 333 residues: Transcription termination factor MTERF6, chloroplastic/mitochondrial (333 aa).

Belongs to the mTERF family.

It localises to the plastid. The protein localises to the chloroplast. It is found in the mitochondrion. Functionally, transcription termination factor essential for chloroplast development. Required for maturation of 16S rRNA, 18S rRNA and 23S rRNA in the chloroplast. Binds to a specific region within the tRNA(Ile)(GAU) gene at a position adjacent to and downstream of the 16S rRNA gene. Required for the maturation of tRNA(Ile)(GAU). Binds to double-stranded DNA. The chain is Transcription termination factor MTERF6, chloroplastic/mitochondrial from Arabidopsis thaliana (Mouse-ear cress).